A 528-amino-acid polypeptide reads, in one-letter code: MIYSIIICAGALLGLWILEKLLAPKDTRPPLPPGPWRKPIIGNLTDFPPKGTPEWLFWAKHQERYGPMSSLEVMGQTIIMINDAQLGIEIMHKKSALSQMIPDAPFAHMAGWGMSLATERNRQAWKTIRANMKQEIGTRRAISTFHPKMEIGIRRFLLRTLDNPDDLRFHIRKEANAFMMDVAYGYTIAPHGKDELYDLTQQSVRQFSHIFSPGEWSVNFFPILRYVPSWFPGASFQIKAAEYKRTIERMTMVPYLWIKDQVARGCSRPSILLRLLQKGHYESGSHQEQVLVWTNAEFVMGGSDTTVSAVSSFFVAMALYPEVQRKAREELDRVVGPTTLATFEHRSQLPFIDALVKEVFRWHPASPLGAPHITQEDQIWDGYLLPKGALLLPNIWTFTHDPSVYHDPMVFKPERFLEGKDSPPETDPMKFVFGFGRRICPGRFVTDEKLFLIACHAVSCFFISPKDPGAPEPDWLPGVISQPGAFDLNVVPRSPAHEELIRSIETDHPWKNADATDISRFMARNQMI.

Cys440 serves as a coordination point for heme.

The protein belongs to the cytochrome P450 family. It depends on heme as a cofactor.

The enzyme catalyses 8-O-methylsterigmatocystin + 2 reduced [NADPH--hemoprotein reductase] + 2 O2 = aflatoxin B1 + methanol + 2 oxidized [NADPH--hemoprotein reductase] + CO2 + H2O + 2 H(+). It catalyses the reaction 8-O-methyldihydrosterigmatocystin + 2 reduced [NADPH--hemoprotein reductase] + 2 O2 = aflatoxin B2 + methanol + 2 oxidized [NADPH--hemoprotein reductase] + CO2 + H2O + 2 H(+). The protein operates within mycotoxin biosynthesis; aflatoxin biosynthesis. In terms of biological role, converts O-methylsterigmatocystin (OMST) to aflatoxin B1 and converts dihydro-O-methylsterigmatocystin (DHOMST) to aflatoxin B2 in the aflatoxin biosynthesis pathway. The sequence is that of O-methylsterigmatocystin oxidoreductase (ordA) from Aspergillus flavus.